The sequence spans 253 residues: Putative glutamine amidotransferase PB2B2.05 (253 aa).

Residues 5-228 (IIALSVGFSN…INRSKWHMKQ (224 aa)) enclose the Glutamine amidotransferase type-1 domain. Catalysis depends on Cys-100, which acts as the Nucleophile. Catalysis depends on residues His-200 and Glu-202.

The protein resides in the cytoplasm. It is found in the nucleus. In Schizosaccharomyces pombe (strain 972 / ATCC 24843) (Fission yeast), this protein is Putative glutamine amidotransferase PB2B2.05.